Here is a 440-residue protein sequence, read N- to C-terminus: Gamma-aminobutyric acid receptor subunit pi (440 aa).

Positions 1–23 (MSYSLYLAFLCLSLLTQRTCIQG) are cleaved as a signal peptide. Residues 24–241 (NQVNVEVSRS…LVLQFELRRN (218 aa)) are Extracellular-facing. 3 N-linked (GlcNAc...) asparagine glycosylation sites follow: Asn-43, Asn-102, and Asn-145. An intrachain disulfide couples Cys-160 to Cys-174. Asn-196 and Asn-228 each carry an N-linked (GlcNAc...) asparagine glycan. A helical membrane pass occupies residues 242–262 (VLYFILETYVPSTFLVVLSWV). Residues 263–270 (SFWISLDS) lie on the Cytoplasmic side of the membrane. Residues 271–290 (VPARTCIGVTTVLSMTTLMI) traverse the membrane as a helical segment. Topologically, residues 291 to 301 (GSRTSLPNTNC) are extracellular. The helical transmembrane segment at 302-322 (FIKAIDVYLGICFSFVFGALL) threads the bilayer. The Cytoplasmic portion of the chain corresponds to 323–419 (EYAVAHYSSL…NPSNVDRYSK (97 aa)). The helical transmembrane segment at 420–440 (LLFPLIFMLANVFYWAYYMYF) threads the bilayer.

It belongs to the ligand-gated ion channel (TC 1.A.9) family. Gamma-aminobutyric acid receptor (TC 1.A.9.5) subfamily. GABRP sub-subfamily. In terms of assembly, heteropentamer, formed by a combination of alpha (GABRA1-6), beta (GABRB1-3), gamma (GABRG1-3), delta (GABRD), epsilon (GABRE), rho (GABRR1-3), pi (GABRP) and theta (GABRQ) chains, each subunit exhibiting distinct physiological and pharmacological properties.

The protein resides in the cell membrane. It localises to the apical cell membrane. It catalyses the reaction chloride(in) = chloride(out). Its function is as follows. Pi subunit of the heteropentameric ligand-gated chloride channel gated by gamma-aminobutyric acid (GABA). GABA-gated chloride channels, also named GABA(A) receptors (GABAAR), consist of five subunits arranged around a central pore and contain GABA active binding site(s) located at the alpha and beta subunit interfaces. When activated by GABA, GABAARs selectively allow the flow of chloride anions across the cell membrane down their electrochemical gradient. Pi-containing GABAARs are mostly located in peripheral tissues. In the uterus, pi subunits modulate uterus contraction by altering the sensitivity of GABAARs to pregnanolone. In the lungs, pi-containing GABAARs contribute to pulmonary fluid transport via luminal secretion of chloride. The protein is Gamma-aminobutyric acid receptor subunit pi of Mus musculus (Mouse).